A 672-amino-acid polypeptide reads, in one-letter code: Zinc finger protein 271 (672 aa).

Residues M1 to S29 form a disordered region. Basic and acidic residues predominate over residues S9–T22. Residues H80–H102 form a C2H2-type 1; degenerate zinc finger. C2H2-type zinc fingers lie at residues Y107–H129, Y135–H157, Y163–H185, Y191–H213, Y219–H241, Y247–H269, Y275–H297, Y303–H325, Y331–H353, Y359–H381, Y387–H409, Y415–H437, Y443–H465, Y471–H493, Y499–H521, Y527–H549, N555–H577, Y583–H605, and Y611–H633.

The protein belongs to the krueppel C2H2-type zinc-finger protein family.

The protein localises to the nucleus. In terms of biological role, may be involved in transcriptional regulation. This is Zinc finger protein 271 (ZNF271) from Pongo abelii (Sumatran orangutan).